A 401-amino-acid polypeptide reads, in one-letter code: Stearoyl-[acyl-carrier-protein] 9-desaturase 3, chloroplastic (401 aa).

Residues 1 to 31 (MSMALLLTSPAMKQKPAVITSPRRGSSPSRR) form a disordered region. A chloroplast-targeting transit peptide spans 1–35 (MSMALLLTSPAMKQKPAVITSPRRGSSPSRRLRVS). The Fe cation site is built by Glu-140, Glu-178, His-181, Glu-231, Glu-264, and His-267.

Belongs to the fatty acid desaturase type 2 family. In terms of assembly, homodimer. Requires Fe(2+) as cofactor. As to expression, ubiquitously expressed with a preference in leaves, flowers and stems.

Its subcellular location is the plastid. The protein localises to the chloroplast. The enzyme catalyses octadecanoyl-[ACP] + 2 reduced [2Fe-2S]-[ferredoxin] + O2 + 2 H(+) = (9Z)-octadecenoyl-[ACP] + 2 oxidized [2Fe-2S]-[ferredoxin] + 2 H2O. It participates in lipid metabolism; fatty acid metabolism. Converts stearoyl-ACP to oleoyl-ACP by introduction of a cis double bond between carbons 9 and 10 of the acyl chain. Also able to convert palmitoyl-ACP to palmitoleoyl-ACP at the C9 position. Exhibits delta-9 palmitoyl-[acyl-carrier-protein] desaturase (PAD) activity. Involved in omega-7 monounsaturated fatty acid biosynthesis, especially in the endosperm oil. In Arabidopsis thaliana (Mouse-ear cress), this protein is Stearoyl-[acyl-carrier-protein] 9-desaturase 3, chloroplastic (S-ACP-DES3).